We begin with the raw amino-acid sequence, 95 residues long: Cell division protein FtsB (95 aa).

Residues 1 to 3 (MRW) lie on the Cytoplasmic side of the membrane. The helical transmembrane segment at 4–21 (VLAGLTALLLWLQGLLWF) threads the bilayer. Over 22–95 (GEGGLNDVRG…QIIEREDDAR (74 aa)) the chain is Periplasmic. A coiled-coil region spans residues 26–76 (LNDVRGLSRSVEAQREEVDRLRQRNQALEAEVNDLKTGLEALEERARSELG).

This sequence belongs to the FtsB family. As to quaternary structure, part of a complex composed of FtsB, FtsL and FtsQ.

Its subcellular location is the cell inner membrane. Functionally, essential cell division protein. May link together the upstream cell division proteins, which are predominantly cytoplasmic, with the downstream cell division proteins, which are predominantly periplasmic. The protein is Cell division protein FtsB of Alkalilimnicola ehrlichii (strain ATCC BAA-1101 / DSM 17681 / MLHE-1).